A 137-amino-acid chain; its full sequence is Small ribosomal subunit protein uS9 (137 aa).

Residues 105–117 show a composition bias toward basic and acidic residues; sequence LKVEGYLTRDPRA. The tract at residues 105–137 is disordered; it reads LKVEGYLTRDPRAKERKKYGLRKARKAPQYSKR. The span at 118–137 shows a compositional bias: basic residues; the sequence is KERKKYGLRKARKAPQYSKR.

The protein belongs to the universal ribosomal protein uS9 family.

The chain is Small ribosomal subunit protein uS9 from Cyanothece sp. (strain PCC 7425 / ATCC 29141).